A 91-amino-acid chain; its full sequence is UPF0250 protein NMA1380 (91 aa).

Belongs to the UPF0250 family.

The sequence is that of UPF0250 protein NMA1380 from Neisseria meningitidis serogroup A / serotype 4A (strain DSM 15465 / Z2491).